The primary structure comprises 61 residues: Cobrotoxin-b (61 aa).

Cystine bridges form between Cys-3-Cys-23, Cys-17-Cys-40, Cys-42-Cys-53, and Cys-54-Cys-59.

The protein belongs to the three-finger toxin family. Short-chain subfamily. Type I alpha-neurotoxin sub-subfamily. Expressed by the venom gland.

The protein localises to the secreted. Produces peripheral paralysis by blocking neuromuscular transmission at the postsynaptic site. Binds to the nicotinic acetylcholine receptor. The polypeptide is Cobrotoxin-b (Naja kaouthia (Monocled cobra)).